The chain runs to 330 residues: DNA primase small subunit PriS (330 aa).

Catalysis depends on residues Asp101 and Asp103. Zn(2+) is bound by residues Cys116, Cys119, Cys128, and Asp131. Residue Asp235 is part of the active site.

Belongs to the eukaryotic-type primase small subunit family. In terms of assembly, heterodimer of a small subunit (PriS) and a large subunit (PriL). The cofactor is Mg(2+). Requires Mn(2+) as cofactor.

Its function is as follows. Catalytic subunit of DNA primase, an RNA polymerase that catalyzes the synthesis of short RNA molecules used as primers for DNA polymerase during DNA replication. The small subunit contains the primase catalytic core and has DNA synthesis activity on its own. Binding to the large subunit stabilizes and modulates the activity, increasing the rate of DNA synthesis while decreasing the length of the DNA fragments, and conferring RNA synthesis capability. The DNA polymerase activity may enable DNA primase to also catalyze primer extension after primer synthesis. May also play a role in DNA repair. Possesses a template-independent 3'-terminal nucleotidyl transferase activity. The sequence is that of DNA primase small subunit PriS from Saccharolobus solfataricus (strain ATCC 35092 / DSM 1617 / JCM 11322 / P2) (Sulfolobus solfataricus).